The sequence spans 304 residues: N-acetyl-D-glucosamine kinase (304 aa).

ATP contacts are provided by residues 4–11 (GFDMGGTK) and 133–140 (GVGGGLIV). His157, Cys177, Cys179, and Cys184 together coordinate Zn(2+).

It belongs to the ROK (NagC/XylR) family. NagK subfamily.

The catalysed reaction is N-acetyl-D-glucosamine + ATP = N-acetyl-D-glucosamine 6-phosphate + ADP + H(+). It functions in the pathway cell wall biogenesis; peptidoglycan recycling. Its function is as follows. Catalyzes the phosphorylation of N-acetyl-D-glucosamine (GlcNAc) derived from cell-wall degradation, yielding GlcNAc-6-P. In Yersinia pseudotuberculosis serotype O:3 (strain YPIII), this protein is N-acetyl-D-glucosamine kinase.